A 171-amino-acid polypeptide reads, in one-letter code: uncharacterized protein (171 aa).

This is an uncharacterized protein from Saccharomyces cerevisiae (strain ATCC 204508 / S288c) (Baker's yeast).